Consider the following 377-residue polypeptide: Chaperone protein DnaJ (377 aa).

The 66-residue stretch at 5–70 folds into the J domain; sequence DYYEILGVSK…QKRAAYDQYG (66 aa). The CR-type zinc finger occupies 132-210; it reads GVTKEIRIPT…CHGHGRVEKT (79 aa). The Zn(2+) site is built by C145, C148, C162, C165, C184, C187, C198, and C201. CXXCXGXG motif repeat units follow at residues 145–152, 162–169, 184–191, and 198–205; these read CDVCHGSG, CPTCHGAG, CPHCQGRG, and CNKCHGHG.

It belongs to the DnaJ family. Homodimer. Requires Zn(2+) as cofactor.

Its subcellular location is the cytoplasm. Its function is as follows. Participates actively in the response to hyperosmotic and heat shock by preventing the aggregation of stress-denatured proteins and by disaggregating proteins, also in an autonomous, DnaK-independent fashion. Unfolded proteins bind initially to DnaJ; upon interaction with the DnaJ-bound protein, DnaK hydrolyzes its bound ATP, resulting in the formation of a stable complex. GrpE releases ADP from DnaK; ATP binding to DnaK triggers the release of the substrate protein, thus completing the reaction cycle. Several rounds of ATP-dependent interactions between DnaJ, DnaK and GrpE are required for fully efficient folding. Also involved, together with DnaK and GrpE, in the DNA replication of plasmids through activation of initiation proteins. In Klebsiella pneumoniae (strain 342), this protein is Chaperone protein DnaJ.